Consider the following 176-residue polypeptide: Large ribosomal subunit protein uL6 (176 aa).

This sequence belongs to the universal ribosomal protein uL6 family. In terms of assembly, part of the 50S ribosomal subunit.

Functionally, this protein binds to the 23S rRNA, and is important in its secondary structure. It is located near the subunit interface in the base of the L7/L12 stalk, and near the tRNA binding site of the peptidyltransferase center. The polypeptide is Large ribosomal subunit protein uL6 (Paraburkholderia phytofirmans (strain DSM 17436 / LMG 22146 / PsJN) (Burkholderia phytofirmans)).